Here is a 195-residue protein sequence, read N- to C-terminus: Large ribosomal subunit protein bL9 (195 aa).

The protein belongs to the bacterial ribosomal protein bL9 family.

In terms of biological role, binds to the 23S rRNA. The sequence is that of Large ribosomal subunit protein bL9 from Rhodopseudomonas palustris (strain TIE-1).